Reading from the N-terminus, the 1077-residue chain is Receptor-type guanylate cyclase daf-11 (1077 aa).

N-linked (GlcNAc...) asparagine glycosylation is found at Asn14, Asn112, Asn149, and Asn311. The helical transmembrane segment at 335 to 355 (TGVIIAIAVIMGVLLMFIIIL) threads the bilayer. Residues 355-695 (LTTIRKCCNG…LARKIIDTVL (341 aa)) form the Protein kinase domain. Residues 356–1077 (TTIRKCCNGS…DSQASTIPDN (722 aa)) lie on the Cytoplasmic side of the membrane. The region spanning 765–895 (TILYSDIVGF…EAVILASKME (131 aa)) is the Guanylate cyclase domain. Residues Asp770, Ile771, and Asp814 each coordinate Mg(2+). Residues 983–1034 (KDKMTLAKEKVIAERKNEEERLQRQQTLQEALEEHEEEIEMNEVLVDEDEGE) adopt a coiled-coil conformation. A disordered region spans residues 1048–1077 (TQMEELEDEPAGRTIGHGRLDSQASTIPDN).

This sequence belongs to the adenylyl cyclase class-4/guanylyl cyclase family. In terms of tissue distribution, expressed in sensory neurons including ASI, ASJ, ASK, AWB and AWC. Expressed in ASJ neurons in the dauer stage.

It is found in the cell membrane. The protein localises to the cell projection. Its subcellular location is the dendrite. The protein resides in the cilium. It localises to the perikaryon. It carries out the reaction GTP = 3',5'-cyclic GMP + diphosphate. Its function is as follows. Guanylate cyclase involved in the production of the second messenger cGMP. In addition, regulates cGMP levels by controlling the transcription of 3',5'-cyclic phosphodiesterase pde-1 and pde-5 mRNAs. Involved in the olfactory, light and pheromone sensing pathways. Part of the chemosensory mechanism of the ASJ sensory neuron that controls dauer formation and dauer recovery. Promotes the calcium flux in ASJ sensory neurons in response to onset and removal of a nitric oxide (NO) stimulus and is thereby required for the behavioral avoidance response to NO-producing organisms like P.aeruginosa. In ASI and ASJ sensory neurons, controls dauer formation and behavioral response to P.aeruginosa by up-regulating the transcription of daf-7, a member of the TGF-beta family. Required for the chemotaxis responses to non-volatile and volatile attractants mediated by the sensory neurons ASE and AWC respectively. Required in ASJ neurons for phototransduction downstream of G protein coupled-photoreceptor lite-1. Plays a role in the development of ASJ sensory neuron axons during late larval stages and in the maintenance of normal axon morphology in adults. Required to maintain the expression of putative olfactory receptor str-2 in one of the two AWC neurons in adults. Regulates, via the production of cGMP, lifespan (in some environmental conditions), sensitivity to oxidative stress and entry into quiescence triggered by satiety. In AWB and AWC sensory neurons, mediates the recognition of food odors which subsequently allows for the detection of preferred food sources. The chain is Receptor-type guanylate cyclase daf-11 from Caenorhabditis elegans.